Here is a 252-residue protein sequence, read N- to C-terminus: uncharacterized protein (252 aa).

6 helical membrane-spanning segments follow: residues 5-25 (LTSL…IVSF), 29-49 (LALV…GTFI), 61-81 (IAGI…GLYF), 141-161 (ILPS…PGII), 179-199 (WLLL…SKWW), and 217-237 (IGWI…LIQF).

This sequence belongs to the DedA family.

It is found in the cell membrane. This is an uncharacterized protein from Buchnera aphidicola subsp. Schizaphis graminum (strain Sg).